The chain runs to 97 residues: Large ribosomal subunit protein uL23 (97 aa).

This sequence belongs to the universal ribosomal protein uL23 family. Part of the 50S ribosomal subunit. Contacts protein L29, and trigger factor when it is bound to the ribosome.

In terms of biological role, one of the early assembly proteins it binds 23S rRNA. One of the proteins that surrounds the polypeptide exit tunnel on the outside of the ribosome. Forms the main docking site for trigger factor binding to the ribosome. The sequence is that of Large ribosomal subunit protein uL23 from Sulfurihydrogenibium sp. (strain YO3AOP1).